The sequence spans 365 residues: Putative 2-dehydropantoate 2-reductase (365 aa).

This sequence belongs to the ketopantoate reductase family.

It catalyses the reaction (R)-pantoate + NADP(+) = 2-dehydropantoate + NADPH + H(+). It participates in cofactor biosynthesis; (R)-pantothenate biosynthesis; (R)-pantoate from 3-methyl-2-oxobutanoate: step 2/2. Catalyzes the NADPH-dependent reduction of ketopantoate into pantoic acid. The polypeptide is Putative 2-dehydropantoate 2-reductase (KPR) (Arabidopsis thaliana (Mouse-ear cress)).